Consider the following 194-residue polypeptide: Mitochondrial import inner membrane translocase subunit Tim22 (194 aa).

2 disulfide bridges follow: cysteine 69–cysteine 141 and cysteine 160–cysteine 179. The next 3 membrane-spanning stretches (helical) occupy residues 74–94 (ALACVGGFVLGGAFGVFTAGI), 123–143 (MSYAKNFAIVGAMFSCTECLI), and 170–190 (AGLKAGAIGCGGFAAFSAAID).

It belongs to the Tim17/Tim22/Tim23 family. As to quaternary structure, component of the TIM22 complex, whose core is composed of TIMM22, associated with peripheral protein FXC1/TIMM10B and the 70 kDa heterohexamer. In most cases, the 70 kDa complex is composed of TIMM9 and TIMM10 (TIMM10A or TIMM10B). A small fraction of the 70 kDa complex is composed of TIMM8 (TIMM8A/DDP1 or TIMM8B/DDP2) and TIMM13. The TIM22 complex also contains AGK and TIMM29. Interacts directly with TIMM9, TIMM10A and FXC1/TIMM10B. Interacts (when oxidized) with TIMM29; interaction is direct. Disulfide bonds promote efficient assembly of the TIM22 complex.

The protein resides in the mitochondrion inner membrane. Essential core component of the TIM22 complex, a complex that mediates the import and insertion of multi-pass transmembrane proteins into the mitochondrial inner membrane. In the TIM22 complex, it constitutes the voltage-activated and signal-gated channel. Forms a twin-pore translocase that uses the membrane potential as external driving force in 2 voltage-dependent steps. The protein is Mitochondrial import inner membrane translocase subunit Tim22 (TIMM22) of Homo sapiens (Human).